A 126-amino-acid polypeptide reads, in one-letter code: DNA-directed RNA polymerase subunit omega (126 aa).

It belongs to the RNA polymerase subunit omega family. The RNAP catalytic core consists of 2 alpha, 1 beta, 1 beta' and 1 omega subunit. When a sigma factor is associated with the core the holoenzyme is formed, which can initiate transcription.

The catalysed reaction is RNA(n) + a ribonucleoside 5'-triphosphate = RNA(n+1) + diphosphate. Its function is as follows. Promotes RNA polymerase assembly. Latches the N- and C-terminal regions of the beta' subunit thereby facilitating its interaction with the beta and alpha subunits. In Rickettsia felis (strain ATCC VR-1525 / URRWXCal2) (Rickettsia azadi), this protein is DNA-directed RNA polymerase subunit omega.